A 275-amino-acid chain; its full sequence is Succinate dehydrogenase [ubiquinone] iron-sulfur subunit, mitochondrial (275 aa).

A mitochondrion-targeting transit peptide spans 1-24 (MFSRRIQVLSPFLKHFVNRNARMM). The 81-residue stretch at 57-137 (PEVKPKLQKY…PTKIYPLPHC (81 aa)) folds into the 2Fe-2S ferredoxin-type domain. [2Fe-2S] cluster is bound by residues cysteine 98, cysteine 103, cysteine 106, and cysteine 118. The region spanning 178 to 208 (DRAKLDGLYECILCACCSTSCPSYWWNSEEY) is the 4Fe-4S ferredoxin-type domain. 3 residues coordinate [4Fe-4S] cluster: cysteine 188, cysteine 191, and cysteine 194. Residue cysteine 198 participates in [3Fe-4S] cluster binding. An a ubiquinone-binding site is contributed by tryptophan 203. Residues cysteine 245 and cysteine 251 each coordinate [3Fe-4S] cluster. A [4Fe-4S] cluster-binding site is contributed by cysteine 255.

It belongs to the succinate dehydrogenase/fumarate reductase iron-sulfur protein family. In terms of assembly, component of complex II composed of four subunits: a flavoprotein (FP), an iron-sulfur protein (IP), and a cytochrome b composed of a large and a small subunit. Requires [2Fe-2S] cluster as cofactor. It depends on [3Fe-4S] cluster as a cofactor. [4Fe-4S] cluster serves as cofactor.

The protein localises to the mitochondrion inner membrane. It catalyses the reaction a quinone + succinate = fumarate + a quinol. It participates in carbohydrate metabolism; tricarboxylic acid cycle; fumarate from succinate (eukaryal route): step 1/1. Iron-sulfur protein (IP) subunit of succinate dehydrogenase (SDH) that is involved in complex II of the mitochondrial electron transport chain and is responsible for transferring electrons from succinate to ubiquinone (coenzyme Q). The polypeptide is Succinate dehydrogenase [ubiquinone] iron-sulfur subunit, mitochondrial (sdh2) (Schizosaccharomyces pombe (strain 972 / ATCC 24843) (Fission yeast)).